Consider the following 188-residue polypeptide: HGPRTase-like protein 1 (188 aa).

This sequence belongs to the purine/pyrimidine phosphoribosyltransferase family. Archaeal HPRT subfamily.

Functionally, may catalyze a purine salvage reaction, the substrate is unknown. The chain is HGPRTase-like protein 1 from Haloquadratum walsbyi (strain DSM 16854 / JCM 12705 / C23).